A 454-amino-acid chain; its full sequence is Protein phosphatase methylesterase 1 (454 aa).

2 disordered regions span residues 1-69 and 181-203; these read MSEL…TGTV and TTVTAASSVPGEGDETTGQAPPP. The span at 44 to 69 shows a compositional bias: low complexity; the sequence is AGPSPGGFPFDDDSSSASSVSSTGTV. Active-site residues include serine 240, aspartate 266, and histidine 412.

The protein belongs to the AB hydrolase superfamily.

The catalysed reaction is [phosphatase 2A protein]-C-terminal L-leucine methyl ester + H2O = [phosphatase 2A protein]-C-terminal L-leucine + methanol + H(+). Its function is as follows. Demethylates proteins that have been reversibly carboxymethylated. Demethylates the phosphatase PP2A catalytic subunit. The protein is Protein phosphatase methylesterase 1 (pme-1) of Neurospora crassa (strain ATCC 24698 / 74-OR23-1A / CBS 708.71 / DSM 1257 / FGSC 987).